The primary structure comprises 317 residues: tRNA uridine(34) hydroxylase (317 aa).

The Rhodanese domain maps to 123–217 (EDDDTIVIDA…YGKDPETKGE (95 aa)). Catalysis depends on Cys-177, which acts as the Cysteine persulfide intermediate.

It belongs to the TrhO family.

The enzyme catalyses uridine(34) in tRNA + AH2 + O2 = 5-hydroxyuridine(34) in tRNA + A + H2O. In terms of biological role, catalyzes oxygen-dependent 5-hydroxyuridine (ho5U) modification at position 34 in tRNAs. This chain is tRNA uridine(34) hydroxylase, found in Staphylococcus carnosus (strain TM300).